We begin with the raw amino-acid sequence, 308 residues long: Acetaldehyde dehydrogenase (308 aa).

Position 14–17 (14–17 (TGNI)) interacts with NAD(+). The Acyl-thioester intermediate role is filled by C129. NAD(+) is bound by residues 160 to 168 (SAGPGTRQN) and N280.

The protein belongs to the acetaldehyde dehydrogenase family.

It carries out the reaction acetaldehyde + NAD(+) + CoA = acetyl-CoA + NADH + H(+). The polypeptide is Acetaldehyde dehydrogenase (Thermomicrobium roseum (strain ATCC 27502 / DSM 5159 / P-2)).